The following is a 324-amino-acid chain: MAKEIKKIAVLTSGGDAPGMNAAIRGVVRAALNEGLEIFGVQDGYYGLYHDKVIPLDRRSVSEIINRGGTFLGSARFPQFKDIEVRKQAVKILAKYEIDALVVIGGDGSYMGAKLLTEEFGYPCIGLPGTIDNDIVGTDYTIGYQTALQTAVEAIDRLRDTSTSHQRISIVEIMGRHCGDLTISAALAGGCEYIIVPEKGLDKESLIHSIADNFRKGKRHAIIAITELMTDVHQLARELEEKFGHETRATVLGHIQRGGSPCPFDRILASRMGVYAVDLLRQGFGGRCVGIQNEHLVHHDIIDAINNMRRPFKQDIFEAASKLA.

Glycine 15 contacts ATP. Residue 25 to 29 participates in ADP binding; sequence RGVVR. Residues 76 to 77 and 106 to 109 each bind ATP; these read RF and GDGS. Position 107 (aspartate 107) interacts with Mg(2+). Residue 130–132 participates in substrate binding; sequence TID. The active-site Proton acceptor is the aspartate 132. Arginine 159 is an ADP binding site. Residues arginine 167 and 174-176 contribute to the substrate site; that span reads MGR. ADP-binding positions include 190 to 192, lysine 216, and 218 to 220; these read GCE and KRH. Substrate is bound by residues glutamate 227, arginine 248, and 254 to 257; that span reads HIQR.

It belongs to the phosphofructokinase type A (PFKA) family. ATP-dependent PFK group I subfamily. Prokaryotic clade 'B1' sub-subfamily. Homotetramer. Mg(2+) serves as cofactor.

The protein resides in the cytoplasm. It catalyses the reaction beta-D-fructose 6-phosphate + ATP = beta-D-fructose 1,6-bisphosphate + ADP + H(+). It functions in the pathway carbohydrate degradation; glycolysis; D-glyceraldehyde 3-phosphate and glycerone phosphate from D-glucose: step 3/4. Allosterically activated by ADP and other diphosphonucleosides, and allosterically inhibited by phosphoenolpyruvate. Functionally, catalyzes the phosphorylation of D-fructose 6-phosphate to fructose 1,6-bisphosphate by ATP, the first committing step of glycolysis. The chain is ATP-dependent 6-phosphofructokinase from Haemophilus ducreyi (strain 35000HP / ATCC 700724).